Here is a 485-residue protein sequence, read N- to C-terminus: Aspartyl/glutamyl-tRNA(Asn/Gln) amidotransferase subunit B (485 aa).

The protein belongs to the GatB/GatE family. GatB subfamily. In terms of assembly, heterotrimer of A, B and C subunits.

It catalyses the reaction L-glutamyl-tRNA(Gln) + L-glutamine + ATP + H2O = L-glutaminyl-tRNA(Gln) + L-glutamate + ADP + phosphate + H(+). The catalysed reaction is L-aspartyl-tRNA(Asn) + L-glutamine + ATP + H2O = L-asparaginyl-tRNA(Asn) + L-glutamate + ADP + phosphate + 2 H(+). Allows the formation of correctly charged Asn-tRNA(Asn) or Gln-tRNA(Gln) through the transamidation of misacylated Asp-tRNA(Asn) or Glu-tRNA(Gln) in organisms which lack either or both of asparaginyl-tRNA or glutaminyl-tRNA synthetases. The reaction takes place in the presence of glutamine and ATP through an activated phospho-Asp-tRNA(Asn) or phospho-Glu-tRNA(Gln). In Ruminiclostridium cellulolyticum (strain ATCC 35319 / DSM 5812 / JCM 6584 / H10) (Clostridium cellulolyticum), this protein is Aspartyl/glutamyl-tRNA(Asn/Gln) amidotransferase subunit B.